The primary structure comprises 178 residues: MEICWGPYSHLISLLLILLFHSEAACRPSGKRPCKMQAFRIWDTNQKTFYLRNNQLIAGYLQGPNIKLEEKIDMVPIDLHSVFLGIHGGKLCLSCAKSGDDIKLQLEEVNITDLSKNKEEDKRFTFIRSEKGPTTSFESAACPGWFLCTTLEADRPVSLTNTPEEPLIVTKFYFQEDQ.

A signal peptide spans 1-26 (MEICWGPYSHLISLLLILLFHSEAAC). A disulfide bridge connects residues C92 and C142. N110 is a glycosylation site (N-linked (GlcNAc...) asparagine).

The protein belongs to the IL-1 family.

The protein resides in the secreted. It is found in the cytoplasm. Its function is as follows. Anti-inflammatory antagonist of interleukin-1 family of proinflammatory cytokines such as interleukin-1beta/IL1B and interleukin-1alpha/IL1A. Protects from immune dysregulation and uncontrolled systemic inflammation triggered by IL1 for a range of innate stimulatory agents such as pathogens. The protein is Interleukin-1 receptor antagonist protein (Il1rn) of Mus musculus (Mouse).